We begin with the raw amino-acid sequence, 240 residues long: UDP-2,3-diacylglucosamine hydrolase (240 aa).

Residues Asp8, His10, Asp41, Asn79, and His114 each contribute to the Mn(2+) site. Residue 79–80 (NR) coordinates substrate. Residues Asp122, Ser160, Asn164, Lys167, and His195 each coordinate substrate. Mn(2+) contacts are provided by His195 and His197.

It belongs to the LpxH family. Mn(2+) is required as a cofactor.

Its subcellular location is the cell inner membrane. The enzyme catalyses UDP-2-N,3-O-bis[(3R)-3-hydroxytetradecanoyl]-alpha-D-glucosamine + H2O = 2-N,3-O-bis[(3R)-3-hydroxytetradecanoyl]-alpha-D-glucosaminyl 1-phosphate + UMP + 2 H(+). It functions in the pathway glycolipid biosynthesis; lipid IV(A) biosynthesis; lipid IV(A) from (3R)-3-hydroxytetradecanoyl-[acyl-carrier-protein] and UDP-N-acetyl-alpha-D-glucosamine: step 4/6. Hydrolyzes the pyrophosphate bond of UDP-2,3-diacylglucosamine to yield 2,3-diacylglucosamine 1-phosphate (lipid X) and UMP by catalyzing the attack of water at the alpha-P atom. Involved in the biosynthesis of lipid A, a phosphorylated glycolipid that anchors the lipopolysaccharide to the outer membrane of the cell. The sequence is that of UDP-2,3-diacylglucosamine hydrolase from Shigella boydii serotype 18 (strain CDC 3083-94 / BS512).